Reading from the N-terminus, the 1014-residue chain is Regulator of telomere elongation helicase 1 homolog (1014 aa).

The 318-residue stretch at 7–324 (AGIPVHFPFE…KEMLLELEKA (318 aa)) folds into the Helicase ATP-binding domain. ATP is bound at residue 42–49 (SPTGTGKT). Cys-147, Cys-165, Cys-174, and Cys-210 together coordinate [4Fe-4S] cluster. Positions 253–256 (DEAH) match the DEAH box motif. The residue at position 873 (Thr-873) is a Phosphothreonine. The tract at residues 891–917 (TDMVKTEPGTSNSCSYGNTSSSGSDSR) is disordered. Residues 899–917 (GTSNSCSYGNTSSSGSDSR) show a composition bias toward low complexity.

The protein belongs to the helicase family. RAD3/XPD subfamily.

It is found in the nucleus. It catalyses the reaction ATP + H2O = ADP + phosphate + H(+). In terms of biological role, a probable ATP-dependent DNA helicase implicated in DNA repair and the maintenance of genomic stability. Acts as an anti-recombinase to counteract toxic recombination and limit crossover during meiosis. Regulates meiotic recombination and crossover homeostasis by physically dissociating strand invasion events and thereby promotes noncrossover repair by meiotic synthesis dependent strand annealing (SDSA) as well as disassembly of D loop recombination intermediates. The sequence is that of Regulator of telomere elongation helicase 1 homolog from Drosophila mojavensis (Fruit fly).